The sequence spans 328 residues: MAFRFAVDCLGFENKPSEAIEAVLKYWSFHQDLNFILIGDEKAFDGLDILPKNITKKLANSFIEMTDTPLSARRKVNSSMQIAINLVREGNADVVISAGSSAVYASLTNDAFGKINKNTKSAFMSYVPTDNNNWFYFLDVGANKYFTGKELYFLGLMADIFVKKTTTKKTPKIGLLNIGTEENKGFDYHQEAFKLLKADKNLNFLGFVESRFLLDGICDILIADGYSGNLVLKAMEGTFKTIARILKRGYKRNPLAGLFSLGIIKSVAKKFDYKNNAGAVVMGLNKLALKTHGSADKQQFLSTIRLAHLSLKSDLINAIKTSLNNYEE.

The protein belongs to the PlsX family. In terms of assembly, homodimer. Probably interacts with PlsY.

The protein resides in the cytoplasm. It carries out the reaction a fatty acyl-[ACP] + phosphate = an acyl phosphate + holo-[ACP]. It functions in the pathway lipid metabolism; phospholipid metabolism. Functionally, catalyzes the reversible formation of acyl-phosphate (acyl-PO(4)) from acyl-[acyl-carrier-protein] (acyl-ACP). This enzyme utilizes acyl-ACP as fatty acyl donor, but not acyl-CoA. The protein is Phosphate acyltransferase of Mycoplasma genitalium (strain ATCC 33530 / DSM 19775 / NCTC 10195 / G37) (Mycoplasmoides genitalium).